Here is a 224-residue protein sequence, read N- to C-terminus: Lipoprotein-releasing system ATP-binding protein LolD (224 aa).

One can recognise an ABC transporter domain in the interval 4–224 (LSIRNVFKSY…RLAGGEVSEA (221 aa)). 40-47 (GASGAGKS) provides a ligand contact to ATP.

The protein belongs to the ABC transporter superfamily. Lipoprotein translocase (TC 3.A.1.125) family. As to quaternary structure, the complex is composed of two ATP-binding proteins (LolD) and two transmembrane proteins (LolC and LolE).

It is found in the cell inner membrane. Its function is as follows. Part of the ABC transporter complex LolCDE involved in the translocation of mature outer membrane-directed lipoproteins, from the inner membrane to the periplasmic chaperone, LolA. Responsible for the formation of the LolA-lipoprotein complex in an ATP-dependent manner. This Myxococcus xanthus (strain DK1622) protein is Lipoprotein-releasing system ATP-binding protein LolD.